A 34-amino-acid polypeptide reads, in one-letter code: Ornithine carbamoyltransferase, catabolic (34 aa).

The protein belongs to the aspartate/ornithine carbamoyltransferase superfamily. OTCase family. In terms of assembly, probably nonameric or dodecameric.

The protein resides in the cytoplasm. It catalyses the reaction carbamoyl phosphate + L-ornithine = L-citrulline + phosphate + H(+). It functions in the pathway amino-acid degradation; L-arginine degradation via ADI pathway; carbamoyl phosphate from L-arginine: step 2/2. This is Ornithine carbamoyltransferase, catabolic (arcB) from Pseudomonas putida (Arthrobacter siderocapsulatus).